Reading from the N-terminus, the 510-residue chain is Glycerol kinase (510 aa).

Residue Thr-13 coordinates ADP. ATP contacts are provided by Thr-13 and Thr-14. Thr-13 contributes to the sn-glycerol 3-phosphate binding site. Arg-17 lines the ADP pocket. Sn-glycerol 3-phosphate contacts are provided by Arg-83, Glu-84, Tyr-135, and Asp-255. Glycerol-binding residues include Arg-83, Glu-84, Tyr-135, Asp-255, and Gln-256. ADP is bound by residues Thr-277, Gly-321, Gly-421, and Asn-425. ATP is bound by residues Thr-277, Gly-321, and Gly-421.

The protein belongs to the FGGY kinase family.

The catalysed reaction is glycerol + ATP = sn-glycerol 3-phosphate + ADP + H(+). It functions in the pathway polyol metabolism; glycerol degradation via glycerol kinase pathway; sn-glycerol 3-phosphate from glycerol: step 1/1. Its function is as follows. Key enzyme in the regulation of glycerol uptake and metabolism. Catalyzes the phosphorylation of glycerol to yield sn-glycerol 3-phosphate. The chain is Glycerol kinase from Halobacterium salinarum (strain ATCC 29341 / DSM 671 / R1).